The chain runs to 45 residues: Photosystem I reaction center subunit IX 1 (45 aa).

The helical transmembrane segment at 9-29 (WFRSAPVVATIWITLTAGIIV) threads the bilayer.

This sequence belongs to the PsaJ family.

It localises to the cellular thylakoid membrane. May help in the organization of the PsaE and PsaF subunits. In Prochlorococcus marinus (strain NATL1A), this protein is Photosystem I reaction center subunit IX 1.